The primary structure comprises 101 residues: Ubiquitin-related modifier 1 (101 aa).

Gly-101 carries the 1-thioglycine modification. Gly-101 is covalently cross-linked (Glycyl lysine isopeptide (Gly-Lys) (interchain with K-? in acceptor proteins)).

It belongs to the URM1 family. In terms of assembly, component of a complex at least composed of URM1, CTU2/NCS2 and CTU1/ATPBD3. C-terminal thiocarboxylation occurs in 2 steps, it is first acyl-adenylated (-COAMP) via the hesA/moeB/thiF part of MOCS3, then thiocarboxylated (-COSH) via the rhodanese domain of MOCS3.

Its subcellular location is the cytoplasm. The protein operates within tRNA modification; 5-methoxycarbonylmethyl-2-thiouridine-tRNA biosynthesis. Acts as a sulfur carrier required for 2-thiolation of mcm(5)S(2)U at tRNA wobble positions of cytosolic tRNA(Lys), tRNA(Glu) and tRNA(Gln). Serves as sulfur donor in tRNA 2-thiolation reaction by being thiocarboxylated (-COSH) at its C-terminus by MOCS3. The sulfur is then transferred to tRNA to form 2-thiolation of mcm(5)S(2)U. Also acts as a ubiquitin-like protein (UBL) that is covalently conjugated via an isopeptide bond to lysine residues of target proteins such as MOCS3, ATPBD3, CTU2, USP15 and CAS. The thiocarboxylated form serves as substrate for conjugation and oxidative stress specifically induces the formation of UBL-protein conjugates. The sequence is that of Ubiquitin-related modifier 1 from Homo sapiens (Human).